We begin with the raw amino-acid sequence, 132 residues long: Small ribosomal subunit protein uS8 (132 aa).

This sequence belongs to the universal ribosomal protein uS8 family. In terms of assembly, part of the 30S ribosomal subunit. Contacts proteins S5 and S12.

In terms of biological role, one of the primary rRNA binding proteins, it binds directly to 16S rRNA central domain where it helps coordinate assembly of the platform of the 30S subunit. In Ehrlichia chaffeensis (strain ATCC CRL-10679 / Arkansas), this protein is Small ribosomal subunit protein uS8.